A 298-amino-acid chain; its full sequence is Elongation factor Ts (298 aa).

Residues 79-82 form an involved in Mg(2+) ion dislocation from EF-Tu region; that stretch reads TDFV.

The protein belongs to the EF-Ts family.

Its subcellular location is the cytoplasm. In terms of biological role, associates with the EF-Tu.GDP complex and induces the exchange of GDP to GTP. It remains bound to the aminoacyl-tRNA.EF-Tu.GTP complex up to the GTP hydrolysis stage on the ribosome. This chain is Elongation factor Ts, found in Cereibacter sphaeroides (strain ATCC 17029 / ATH 2.4.9) (Rhodobacter sphaeroides).